Reading from the N-terminus, the 273-residue chain is NADPH-dependent 7-cyano-7-deazaguanine reductase (273 aa).

Position 81 to 83 (81 to 83) interacts with substrate; sequence VES. 83-84 lines the NADPH pocket; it reads SK. Catalysis depends on cysteine 179, which acts as the Thioimide intermediate. The active-site Proton donor is aspartate 186. 218 to 219 lines the substrate pocket; the sequence is AE. Residue 247–248 participates in NADPH binding; sequence RG.

The protein belongs to the GTP cyclohydrolase I family. QueF type 2 subfamily. In terms of assembly, homodimer.

It localises to the cytoplasm. It carries out the reaction 7-aminomethyl-7-carbaguanine + 2 NADP(+) = 7-cyano-7-deazaguanine + 2 NADPH + 3 H(+). It participates in tRNA modification; tRNA-queuosine biosynthesis. Catalyzes the NADPH-dependent reduction of 7-cyano-7-deazaguanine (preQ0) to 7-aminomethyl-7-deazaguanine (preQ1). The protein is NADPH-dependent 7-cyano-7-deazaguanine reductase of Rickettsia felis (strain ATCC VR-1525 / URRWXCal2) (Rickettsia azadi).